The primary structure comprises 283 residues: MNILSIQSHVSYGHVGNSAAVFPLQRIGHEVWPVHTVNFSNHTGYGQWGGELIPAAQVRNVIDGMEQRGAFERIDAILSGYQGGSDIADVIVDAVARIKEANPQAVYACDPVMGNAKSGCFVSDLIPPLLRDKVVPVADIITPNQFELEYLTGVPAHDTTSTLEAIAAAQEMGPNTVLVTSVRRPETPADAIEMIAANEQGAWLVRTPFIDFKRNGSGDVTAALFTGHYIRERDAADALARTASSVFDLIETTFTADSRELLIIESQEAIAHPRLQFEVEQIA.

Ser-8 lines the substrate pocket. 2 residues coordinate ATP: Asp-110 and Glu-147. Asp-219 contributes to the substrate binding site.

It belongs to the pyridoxine kinase family. PdxY subfamily. As to quaternary structure, homodimer. Mg(2+) is required as a cofactor.

The catalysed reaction is pyridoxal + ATP = pyridoxal 5'-phosphate + ADP + H(+). It functions in the pathway cofactor metabolism; pyridoxal 5'-phosphate salvage; pyridoxal 5'-phosphate from pyridoxal: step 1/1. Pyridoxal kinase involved in the salvage pathway of pyridoxal 5'-phosphate (PLP). Catalyzes the phosphorylation of pyridoxal to PLP. The chain is Pyridoxal kinase PdxY from Corynebacterium diphtheriae (strain ATCC 700971 / NCTC 13129 / Biotype gravis).